The chain runs to 470 residues: Aminodeoxychorismate synthase component 1 (470 aa).

This sequence belongs to the anthranilate synthase component I family. As to quaternary structure, monomer. Heterodimer consisting of two non-identical subunits: a glutamine amidotransferase subunit (PabA) and a aminodeoxychorismate synthase subunit (PabB). The cofactor is Mg(2+).

The catalysed reaction is chorismate + L-glutamine = 4-amino-4-deoxychorismate + L-glutamate. It functions in the pathway cofactor biosynthesis; tetrahydrofolate biosynthesis; 4-aminobenzoate from chorismate: step 1/2. Functionally, part of a heterodimeric complex that catalyzes the two-step biosynthesis of 4-amino-4-deoxychorismate (ADC), a precursor of p-aminobenzoate (PABA) and tetrahydrofolate. In the first step, a glutamine amidotransferase (PabA) generates ammonia as a substrate that, along with chorismate, is used in the second step, catalyzed by aminodeoxychorismate synthase (PabB) to produce ADC. The polypeptide is Aminodeoxychorismate synthase component 1 (pabB) (Lactococcus lactis subsp. lactis (Streptococcus lactis)).